Reading from the N-terminus, the 303-residue chain is MQKFDTRTFQGLILTLQDYWARQGCTIVQPLDMEVGAGTSHPMTCLRALGPEPMATAYVQPSRRPTDGRYGENPNRLQHYYQFQVVIKPSPDNIQELYLGSLKELGMDPTIHDIRFVEDNWENPTLGAWGLGWEVWLNGMEVTQFTYFQQVGGLECKPVTGEITYGLERLAMYIQGVDSVYDLVWSDGPLGKTTYGDVFHQNEVEQSTYNFEYADVDFLFTCFEQYEKEAQQLLALETPLPLPAYERILKAAHSFNLLDARKAISVTERQRYILRIRTLTKAVAEAYYASREALGFPMCNKNK.

It belongs to the class-II aminoacyl-tRNA synthetase family. As to quaternary structure, tetramer of two alpha and two beta subunits.

It localises to the cytoplasm. The catalysed reaction is tRNA(Gly) + glycine + ATP = glycyl-tRNA(Gly) + AMP + diphosphate. This Klebsiella pneumoniae subsp. pneumoniae (strain ATCC 700721 / MGH 78578) protein is Glycine--tRNA ligase alpha subunit.